A 524-amino-acid chain; its full sequence is Chitinase D (524 aa).

Positions 1-30 are cleaved as a signal peptide; it reads MNQAVRFRPVITFALAFILIITWFAPRADA. Positions 95–180 constitute a Fibronectin type-III domain; it reads VPAGLTSSLV…TSLSVTTSTG (86 aa). The GH18 domain maps to 190-514; sequence KWLIGYWHNF…NAHRPFLNGL (325 aa). Glu-303 acts as the Proton donor in catalysis.

The protein belongs to the glycosyl hydrolase 18 family. Chitinase class II subfamily.

The enzyme catalyses Random endo-hydrolysis of N-acetyl-beta-D-glucosaminide (1-&gt;4)-beta-linkages in chitin and chitodextrins.. In Niallia circulans (Bacillus circulans), this protein is Chitinase D (chiD).